We begin with the raw amino-acid sequence, 171 residues long: Putative adenylate kinase (171 aa).

ATP-binding residues include Gly9, Gly11, Lys12, Thr13, and Thr14. An NMP region spans residues 28-51; that stretch reads SLGELIRQKGFVLGRDPIRGYLEA. Positions 99 to 109 are LID; sequence GRGYPEGKVLE. Residue Arg100 coordinates ATP.

Belongs to the adenylate kinase family. AK6 subfamily. As to quaternary structure, interacts with uS11. Not a structural component of 40S pre-ribosomes, but transiently interacts with them by binding to uS11.

It catalyses the reaction AMP + ATP = 2 ADP. The catalysed reaction is ATP + H2O = ADP + phosphate + H(+). Functionally, broad-specificity nucleoside monophosphate (NMP) kinase that catalyzes the reversible transfer of the terminal phosphate group between nucleoside triphosphates and monophosphates. Also has ATPase activity. Involved in the late maturation steps of the 30S ribosomal particles, specifically 16S rRNA maturation. While NMP activity is not required for ribosome maturation, ATPase activity is. Associates transiently with small ribosomal subunit protein uS11. ATP hydrolysis breaks the interaction with uS11. May temporarily remove uS11 from the ribosome to enable a conformational change of the ribosomal RNA that is needed for the final maturation step of the small ribosomal subunit. In Methanothermobacter thermautotrophicus (strain ATCC 29096 / DSM 1053 / JCM 10044 / NBRC 100330 / Delta H) (Methanobacterium thermoautotrophicum), this protein is Putative adenylate kinase.